We begin with the raw amino-acid sequence, 683 residues long: U4/U6 small nuclear ribonucleoprotein Prp3 (683 aa).

The 87-residue stretch at 1–87 (MALSKRELDE…HSKSSSDRSR (87 aa)) folds into the PWI domain. Residues 73 to 107 (GRSSRHSKSSSDRSRKRELKEVFGDDSEISKESSG) are compositionally biased toward basic and acidic residues. The disordered stretch occupies residues 73-135 (GRSSRHSKSS…IPGPPSESPG (63 aa)). Residue lysine 139 forms a Glycyl lysine isopeptide (Lys-Gly) (interchain with G-Cter in SUMO2) linkage. The tract at residues 153–183 (IEERKKQLSFISPPTPQPKTPSSSQPERLPI) is disordered. The residue at position 164 (serine 164) is a Phosphoserine. Phosphothreonine is present on threonine 167. Glycyl lysine isopeptide (Lys-Gly) (interchain with G-Cter in SUMO2) cross-links involve residues lysine 244 and lysine 252. Positions 416–550 (NLVEHPAQLN…VHISVYRVRN (135 aa)) are mediates interaction with SART3. Phosphoserine is present on serine 619.

In terms of assembly, component of the precatalytic spliceosome (spliceosome B complex). Component of the U4/U6-U5 tri-snRNP complex, a building block of the precatalytic spliceosome (spliceosome B complex). The U4/U6-U5 tri-snRNP complex is composed of the U4, U6 and U5 snRNAs and at least PRPF3, PRPF4, PRPF6, PRPF8, PRPF31, SNRNP200, TXNL4A, SNRNP40, SNRPB, SNRPD1, SNRPD2, SNRPD3, SNRPE, SNRPF, SNRPG, DDX23, CD2BP2, PPIH, SNU13, EFTUD2, SART1 and USP39, plus LSM2, LSM3, LSM4, LSM5, LSM6, LSM7 and LSM8. Interacts directly with PRPF4. Part of a heteromeric complex containing PPIH, PRPF3 and PRPF4 that is stable in the absence of RNA. Interacts with SART3; the interaction is direct and recruits the deubiquitinase USP4 to PRPF3. Interacts with PRPF19. Interacts ('Lys-63'-linked polyubiquitinated) with PRPF8 (via the MPN (JAB/Mov34) domain); may stabilize the U4/U6-U5 tri-snRNP complex. Interacts with ERCC6. In terms of processing, ubiquitinated. Undergoes 'Lys-63'-linked polyubiquitination by PRPF19 and deubiquitination by USP4. 'Lys-63'-linked ubiquitination increases the affinity for PRPF8 and may regulate the assembly of the U4/U6-U5 tri-snRNP complex.

It localises to the nucleus. Its subcellular location is the nucleus speckle. Plays a role in pre-mRNA splicing as component of the U4/U6-U5 tri-snRNP complex that is involved in spliceosome assembly, and as component of the precatalytic spliceosome (spliceosome B complex). The protein is U4/U6 small nuclear ribonucleoprotein Prp3 (PRPF3) of Pongo abelii (Sumatran orangutan).